We begin with the raw amino-acid sequence, 49 residues long: Large ribosomal subunit protein bL32 (49 aa).

The protein belongs to the bacterial ribosomal protein bL32 family.

This chain is Large ribosomal subunit protein bL32, found in Nitratiruptor sp. (strain SB155-2).